The sequence spans 199 residues: Probable GTP-binding protein EngB (199 aa).

The 172-residue stretch at 28 to 199 (DLPEIALAGR…ESWDTILEYL (172 aa)) folds into the EngB-type G domain. Residues 36–43 (GRSNVGKS), 63–67 (GKTQL), 81–84 (DVPG), 148–151 (TKAD), and 180–182 (FSS) each bind GTP. Residues Ser-43 and Thr-65 each contribute to the Mg(2+) site.

This sequence belongs to the TRAFAC class TrmE-Era-EngA-EngB-Septin-like GTPase superfamily. EngB GTPase family. Mg(2+) serves as cofactor.

Necessary for normal cell division and for the maintenance of normal septation. This Streptococcus equi subsp. zooepidemicus (strain H70) protein is Probable GTP-binding protein EngB.